A 361-amino-acid chain; its full sequence is Alanine racemase 2 (361 aa).

The active-site Proton acceptor; specific for D-alanine is Lys30. Lys30 bears the N6-(pyridoxal phosphate)lysine mark. Arg122 is a binding site for substrate. Tyr256 serves as the catalytic Proton acceptor; specific for L-alanine. Met303 lines the substrate pocket.

Belongs to the alanine racemase family. It depends on pyridoxal 5'-phosphate as a cofactor.

The enzyme catalyses L-alanine = D-alanine. Its pathway is amino-acid biosynthesis; D-alanine biosynthesis; D-alanine from L-alanine: step 1/1. In terms of biological role, catalyzes the interconversion of L-alanine and D-alanine. May also act on other amino acids. The polypeptide is Alanine racemase 2 (alr2) (Staphylococcus aureus (strain Mu50 / ATCC 700699)).